Reading from the N-terminus, the 780-residue chain is WD repeat-containing protein 27 (780 aa).

13 WD repeats span residues 3 to 56 (TPPE…VWSS), 61 to 100 (HQLLTLQGHHQLITAVVFGNQIDPLLLCSASEDYIIMWNV), 111 to 150 (LTPRGTILGSLLQTVLCLRFSLDDRAIAVCAGNKISVMDV), 154 to 193 (SVLVELKGHQGSVTAVEFCPWQAHTLISVSEDRSFKVWDF), 200 to 236 (YSSSILTAYPLLNLLINEENQQLVTGSADGQLWIFSL), 291 to 335 (FPIL…LASF), 342 to 385 (HFKE…VLEI), 500 to 540 (NLSR…VFNA), 544 to 582 (GPPAAFSGHDGAVSTICWSHDKRWLLSTGRDRTLRVWSV), 588 to 639 (MLLL…RYKP), 644 to 685 (KPIF…VFDL), 691 to 738 (AAVL…LWDL), and 752 to 779 (AFCTVLQDTQIRLLKWPSTQQLLSLSQP).

The chain is WD repeat-containing protein 27 (Wdr27) from Mus musculus (Mouse).